Here is a 450-residue protein sequence, read N- to C-terminus: Protein tweety homolog 1 (450 aa).

At 1–43 the chain is on the extracellular side; that stretch reads MGAPPGYRPSAWVHLLHQLPRADFQLRPVPSGFAPQEQEYQQA. The helical transmembrane segment at 44–64 threads the bilayer; the sequence is LLLVAALAGLGLGLSLIFIAV. The Cytoplasmic segment spans residues 65–88; the sequence is YLIRFCCCRPPEPPGSKTPSPGGG. The chain crosses the membrane as a helical span at residues 89–109; the sequence is CVTWSCIVALLAGCIGIGIGF. The Extracellular portion of the chain corresponds to 110 to 214; sequence YGNSETSDGV…DVSFVEEYRW (105 aa). Asn130 carries N-linked (GlcNAc...) asparagine glycosylation. A helical membrane pass occupies residues 215-235; it reads LAYVLLLLLELLVCLFTLLGL. Topologically, residues 236 to 240 are cytoplasmic; that stretch reads AKQSK. The helical transmembrane segment at 241-261 threads the bilayer; that stretch reads WLVIVMTVMSLLVLVLSWGSM. Residues 262-390 are Extracellular-facing; the sequence is GLEAATAVGL…LRGLCEDALE (129 aa). 2 N-linked (GlcNAc...) asparagine glycosylation sites follow: Asn284 and Asn355. Cys303 and Cys370 are oxidised to a cystine. The chain crosses the membrane as a helical span at residues 391 to 411; it reads GLLFLLLFSLLSAGALATALC. Residues 412–450 are Cytoplasmic-facing; that stretch reads SLPRAWALFPPSDDYDDTDDDDPFNPQESKRFVQWQSSI. Residues 428–450 form a disordered region; the sequence is DTDDDDPFNPQESKRFVQWQSSI. Position 440 is a phosphoserine (Ser440).

This sequence belongs to the tweety family. As to quaternary structure, homotetramer; disulfide-linked. Homodimer. N-glycosylated. Contains high-mannose, hybrid and complex oligosaccharides.

Its subcellular location is the cell membrane. The catalysed reaction is chloride(in) = chloride(out). The enzyme catalyses L-glutamate(out) = L-glutamate(in). Calcium-independent, swelling-dependent volume-regulated anion channel (VRAC-swell) which plays a pivotal role in the process of regulatory volume decrease (RVD) in the brain through the efflux of anions like chloride and organic osmolytes like glutamate. The polypeptide is Protein tweety homolog 1 (TTYH1) (Macaca fascicularis (Crab-eating macaque)).